The sequence spans 212 residues: Ribosomal RNA small subunit methyltransferase G (212 aa).

Residues Gly80, Leu85, 131–132 (AE), and Arg146 each bind S-adenosyl-L-methionine.

It belongs to the methyltransferase superfamily. RNA methyltransferase RsmG family.

The protein localises to the cytoplasm. The catalysed reaction is guanosine(527) in 16S rRNA + S-adenosyl-L-methionine = N(7)-methylguanosine(527) in 16S rRNA + S-adenosyl-L-homocysteine. Functionally, specifically methylates the N7 position of guanine in position 527 of 16S rRNA. This is Ribosomal RNA small subunit methyltransferase G from Xylella fastidiosa (strain 9a5c).